A 339-amino-acid chain; its full sequence is Phospho-N-acetylmuramoyl-pentapeptide-transferase (339 aa).

10 helical membrane passes run Thr4–Ile24, Met53–Leu73, Ala80–Leu100, Gly113–Val133, Leu145–Val165, Gly176–Ala196, Phe202–Asn222, Val228–Thr248, Trp253–Val273, and Val318–Tyr338.

Belongs to the glycosyltransferase 4 family. MraY subfamily. Requires Mg(2+) as cofactor.

Its subcellular location is the cell membrane. It catalyses the reaction UDP-N-acetyl-alpha-D-muramoyl-L-alanyl-gamma-D-glutamyl-L-lysyl-D-alanyl-D-alanine + di-trans,octa-cis-undecaprenyl phosphate = Mur2Ac(oyl-L-Ala-gamma-D-Glu-L-Lys-D-Ala-D-Ala)-di-trans,octa-cis-undecaprenyl diphosphate + UMP. Its pathway is cell wall biogenesis; peptidoglycan biosynthesis. In terms of biological role, catalyzes the initial step of the lipid cycle reactions in the biosynthesis of the cell wall peptidoglycan: transfers peptidoglycan precursor phospho-MurNAc-pentapeptide from UDP-MurNAc-pentapeptide onto the lipid carrier undecaprenyl phosphate, yielding undecaprenyl-pyrophosphoryl-MurNAc-pentapeptide, known as lipid I. This is Phospho-N-acetylmuramoyl-pentapeptide-transferase from Streptococcus mutans serotype c (strain ATCC 700610 / UA159).